The following is a 304-amino-acid chain: Acetylglutamate kinase (304 aa).

Substrate is bound by residues 70–71, Arg92, and Asn196; that span reads GG.

It belongs to the acetylglutamate kinase family. ArgB subfamily.

Its subcellular location is the cytoplasm. The enzyme catalyses N-acetyl-L-glutamate + ATP = N-acetyl-L-glutamyl 5-phosphate + ADP. Its pathway is amino-acid biosynthesis; L-arginine biosynthesis; N(2)-acetyl-L-ornithine from L-glutamate: step 2/4. Catalyzes the ATP-dependent phosphorylation of N-acetyl-L-glutamate. The polypeptide is Acetylglutamate kinase (Methanococcoides burtonii (strain DSM 6242 / NBRC 107633 / OCM 468 / ACE-M)).